Here is a 982-residue protein sequence, read N- to C-terminus: Glycine dehydrogenase (decarboxylating) (982 aa).

Lys721 is modified (N6-(pyridoxal phosphate)lysine).

The protein belongs to the GcvP family. The glycine cleavage system is composed of four proteins: P, T, L and H. Pyridoxal 5'-phosphate serves as cofactor.

The enzyme catalyses N(6)-[(R)-lipoyl]-L-lysyl-[glycine-cleavage complex H protein] + glycine + H(+) = N(6)-[(R)-S(8)-aminomethyldihydrolipoyl]-L-lysyl-[glycine-cleavage complex H protein] + CO2. Functionally, the glycine cleavage system catalyzes the degradation of glycine. The P protein binds the alpha-amino group of glycine through its pyridoxal phosphate cofactor; CO(2) is released and the remaining methylamine moiety is then transferred to the lipoamide cofactor of the H protein. The sequence is that of Glycine dehydrogenase (decarboxylating) from Prochlorococcus marinus (strain MIT 9303).